The primary structure comprises 2194 residues: Nucleosome-remodeling factor subunit NURF301-like (2194 aa).

The span at 1 to 12 (MAPPRGRSKRKH) shows a compositional bias: basic residues. The segment at 1–137 (MAPPRGRSKR…EEEESSDDEF (137 aa)) is disordered. The segment covering 60 to 79 (AQRETPSDAEEVEVKIEEIS) has biased composition (basic and acidic residues). Polar residues predominate over residues 80–93 (VRSTPASTPAPKST). Residues 94-112 (SKARGRPKKNPTPPRRKSL) show a composition bias toward basic residues. A compositionally biased stretch (acidic residues) spans 118-137 (DIIYMDEDSEEEEESSDDEF). DDT domains are found at residues 196–256 (TASI…SDDE) and 341–396 (VGKF…SAVR). The PHD-type 1 zinc-finger motif lies at 347–392 (DENCRVCGKSSGRVVGCTQCEAAFHVECSHLKPFPEVLVCNICKKN). Disordered stretches follow at residues 1091 to 1122 (ESWLSRNRGGSSEFSHRSSSARKKRPQRSLDN), 1158 to 1255 (AKRK…PQPN), 1413 to 1433 (TSNFDAQRAQQQHPQSRPVYS), 1657 to 1701 (MRQE…SNDS), and 1834 to 1888 (ESIA…HTPG). A coiled-coil region spans residues 1151–1187 (RAEAEKTAKRKLEATRKAQKAKEDEERRRIQQQQQRS). Basic and acidic residues predominate over residues 1158–1179 (AKRKLEATRKAQKAKEDEERRR). Residues 1665–1684 (TSGYDSSGNPIRSITSSGDT) show a composition bias toward polar residues. Basic and acidic residues predominate over residues 1852–1861 (KSEDDRDKPE). 2 DDT domains span residues 1883 to 1953 (AFHT…EQER) and 1948 to 2014 (IEEQ…AEGY). 2 consecutive PHD-type zinc fingers follow at residues 1899–1950 (IEHC…CIEE) and 1959–2010 (ALYC…CTRE). Positions 2030-2134 (QLTRADYTHV…EVFDKKLIDV (105 aa)) constitute a Bromo domain.

The protein belongs to the BPTF family. Part of a nucleosome remodeling factor-like (NURF-like) complex containing nurf-1 and isw-1.

Its subcellular location is the nucleus. Its function is as follows. Histone-binding component of a NURF-like (nucleosome remodeling factor-like) complex, which would catalyze ATP-dependent nucleosome sliding and facilitate transcription of chromatin. Involved in vulval cell fates. The protein is Nucleosome-remodeling factor subunit NURF301-like (nurf-1) of Caenorhabditis elegans.